A 616-amino-acid polypeptide reads, in one-letter code: MKQSNMLIPTLREMPSDAQVISHALMVRAGYVRQVSAGIYSYLPLAHRVIEKIKKIMREEFDKIGAVEMLAPALLTADLWRESGRYGTYGEDLYKLKNRDQSDFILGPTHEETFTNLIRDAVKSYKQLPLNLYQIQAKYRDEKRPRNGLLRTREFIMKDGYSFHADYDSLDATYEDYRKAYEAIFTRVGLDFKAIIGDGGAMGGKDSQEFMAVTPDRTDLEHWLVLDKAIGSIEEIPADVLKEIKQELSSWLISGEDTIAYSSESDYAANLEMATSEYKPNNKVVSHEDIQRIETPNCKTIDEVAAFLEIDPTQTIKTLLFIADDEPVVALLVGNDQVNEVKLKNYLGADFLEPANEEEAREIFSASFGSLGPVNLPENVKIVADRKVKNIGNAVVGANEDGYHLTGVNPERDFEAAYVDIREVCEGEASPDGRGVLKFARGIEIGHIFKLGTRYSESMGANILDENGRSIPIIMGSYGIGVSRILSAVIEQNARIFVNKTPKGAYRFSWGVNFPKTLAPFDVHLITVNVKDEVSQQLTAKVEESLVDAHYSVLTDNRNERIGSKFSDSDLIGLPIRVTVGKKASDGIVEVKIKSTGDTIEVNAENLLETLSILID.

It belongs to the class-II aminoacyl-tRNA synthetase family. ProS type 1 subfamily. In terms of assembly, homodimer.

The protein resides in the cytoplasm. The enzyme catalyses tRNA(Pro) + L-proline + ATP = L-prolyl-tRNA(Pro) + AMP + diphosphate. Functionally, catalyzes the attachment of proline to tRNA(Pro) in a two-step reaction: proline is first activated by ATP to form Pro-AMP and then transferred to the acceptor end of tRNA(Pro). As ProRS can inadvertently accommodate and process non-cognate amino acids such as alanine and cysteine, to avoid such errors it has two additional distinct editing activities against alanine. One activity is designated as 'pretransfer' editing and involves the tRNA(Pro)-independent hydrolysis of activated Ala-AMP. The other activity is designated 'posttransfer' editing and involves deacylation of mischarged Ala-tRNA(Pro). The misacylated Cys-tRNA(Pro) is not edited by ProRS. In Streptococcus mutans serotype c (strain ATCC 700610 / UA159), this protein is Proline--tRNA ligase.